Reading from the N-terminus, the 74-residue chain is Sec-independent protein translocase protein TatA (74 aa).

A helical transmembrane segment spans residues 1–21 (MGGISIWQLLIIVAIIVLLFG). The interval 51 to 74 (ANFDKVEAKESTSTTEKTKEKEQA) is disordered.

Belongs to the TatA/E family. As to quaternary structure, the Tat system comprises two distinct complexes: a TatABC complex, containing multiple copies of TatA, TatB and TatC subunits, and a separate TatA complex, containing only TatA subunits. Substrates initially bind to the TatABC complex, which probably triggers association of the separate TatA complex to form the active translocon.

It is found in the cell inner membrane. In terms of biological role, part of the twin-arginine translocation (Tat) system that transports large folded proteins containing a characteristic twin-arginine motif in their signal peptide across membranes. TatA could form the protein-conducting channel of the Tat system. The chain is Sec-independent protein translocase protein TatA from Haemophilus ducreyi (strain 35000HP / ATCC 700724).